The following is a 746-amino-acid chain: UvrABC system protein C (746 aa).

The 80-residue stretch at 18 to 97 (AKPGVYKWRD…IKEFDPRFNV (80 aa)) folds into the GIY-YIG domain. Positions 211-246 (RPYIAQLTRDMKEASAELEFEKAARLRDQIQMLETV) constitute a UVR domain. Residues 557 to 577 (ANGNDNGEGGSDISGKGHAVP) form a disordered region.

It belongs to the UvrC family. Interacts with UvrB in an incision complex.

The protein localises to the cytoplasm. Functionally, the UvrABC repair system catalyzes the recognition and processing of DNA lesions. UvrC both incises the 5' and 3' sides of the lesion. The N-terminal half is responsible for the 3' incision and the C-terminal half is responsible for the 5' incision. The sequence is that of UvrABC system protein C from Bifidobacterium longum (strain NCC 2705).